A 254-amino-acid polypeptide reads, in one-letter code: Phosphoribosylaminoimidazole-succinocarboxamide synthase (254 aa).

The protein belongs to the SAICAR synthetase family.

It carries out the reaction 5-amino-1-(5-phospho-D-ribosyl)imidazole-4-carboxylate + L-aspartate + ATP = (2S)-2-[5-amino-1-(5-phospho-beta-D-ribosyl)imidazole-4-carboxamido]succinate + ADP + phosphate + 2 H(+). It functions in the pathway purine metabolism; IMP biosynthesis via de novo pathway; 5-amino-1-(5-phospho-D-ribosyl)imidazole-4-carboxamide from 5-amino-1-(5-phospho-D-ribosyl)imidazole-4-carboxylate: step 1/2. This Bartonella henselae (strain ATCC 49882 / DSM 28221 / CCUG 30454 / Houston 1) (Rochalimaea henselae) protein is Phosphoribosylaminoimidazole-succinocarboxamide synthase.